The sequence spans 550 residues: Beta-fructofuranosidase, insoluble isoenzyme CWINV6 (550 aa).

Residues 28 to 31 (WLND), glutamine 47, 92 to 93 (WS), 157 to 158 (RD), and glutamate 214 each bind substrate. The active site involves aspartate 31. N-linked (GlcNAc...) asparagine glycans are attached at residues asparagine 235 and asparagine 272.

It belongs to the glycosyl hydrolase 32 family. In terms of tissue distribution, expressed in seedlings and leaves, and, to a lower extent, in flowers and seeds.

It localises to the secreted. The protein resides in the extracellular space. The protein localises to the apoplast. Its subcellular location is the cell wall. The catalysed reaction is Hydrolysis of terminal, non-reducing (2-&gt;1)- and (2-&gt;6)-linked beta-D-fructofuranose residues in fructans.. In terms of biological role, 6 and 1-fructan exohydrolase that can degrade both inulin and levan-type fructans, such as phlein, levan, neokestose, levanbiose, 6-kestose, 1-kestose, inulin, and 1,1-nystose. In Arabidopsis thaliana (Mouse-ear cress), this protein is Beta-fructofuranosidase, insoluble isoenzyme CWINV6 (CWINV6).